The primary structure comprises 162 residues: NADH-quinone oxidoreductase subunit I (162 aa).

2 consecutive 4Fe-4S ferredoxin-type domains span residues 52–82 and 93–122; these read LRRY…IEAG and VRYD…EGPN. Cys62, Cys65, Cys68, Cys72, Cys102, Cys105, Cys108, and Cys112 together coordinate [4Fe-4S] cluster.

This sequence belongs to the complex I 23 kDa subunit family. As to quaternary structure, NDH-1 is composed of 14 different subunits. Subunits NuoA, H, J, K, L, M, N constitute the membrane sector of the complex. It depends on [4Fe-4S] cluster as a cofactor.

The protein resides in the cell inner membrane. It catalyses the reaction a quinone + NADH + 5 H(+)(in) = a quinol + NAD(+) + 4 H(+)(out). NDH-1 shuttles electrons from NADH, via FMN and iron-sulfur (Fe-S) centers, to quinones in the respiratory chain. The immediate electron acceptor for the enzyme in this species is believed to be ubiquinone. Couples the redox reaction to proton translocation (for every two electrons transferred, four hydrogen ions are translocated across the cytoplasmic membrane), and thus conserves the redox energy in a proton gradient. In Bradyrhizobium sp. (strain ORS 278), this protein is NADH-quinone oxidoreductase subunit I.